A 540-amino-acid polypeptide reads, in one-letter code: FAD-binding monooxygenase lolF2 (540 aa).

FAD is bound by residues 43-46 and 55-58; these read VWRE and DSLF. Residues 53 to 55, 182 to 188, and 205 to 206 each bind NADP(+); these read AVD, TGPSGVQ, and QS.

It belongs to the FAD-binding monooxygenase family. The cofactor is FAD.

It participates in alkaloid biosynthesis. In terms of biological role, FAD-binding monooxygenase; part of the gene cluster that mediates the biosynthesis of loline alkaloids, potent insecticidal agents composed of a pyrrolizidine ring system and an uncommon ether bridge linking carbons 2 and 7. Lolines are structurally differentiated by the various modifications of the L-amino group and include norloline, loline, N-methylloline, N-acetylloline, N-acetylnorloline, and N-formylloline. The first committed step is the condensation of O-acetyl-L-homoserine (derived from L-aspartic acid) and L-proline, probably catalyzed by the gamma-type pyridoxal 5'-phosphate(PLP)-dependent enzyme lolC, to give the diamino diacid, NACPP. Ensuing cyclization, decarboxylation, and acetylation steps yield 1-exo-acetamidopyrrolizidine (AcAP). LolO is required for installation of the ether bridge upon the pathway intermediate, 1-exo-acetamidopyrrolizidine (AcAP). In sequential 2-oxoglutarate- and O(2)-consuming steps, lolO removes hydrogens from C2 and C7 of AcAP to form both carbon-oxygen bonds in N-acetylnorloline (NANL), the precursor to all other lolines. The enzymes lolD, lolE, lolF and lolT have also been proposed to be involved in the ether-bridge installation. Further processing of the exocyclic moiety of NANL by fungal N-acetamidase (LolN), methyltransferase (LolM), and cytochrome P450 (LolP) enzymes, with occasional involvement of a plant acetyltransferase, generates the other known lolines. LolN transforms NANL to norlonine which is monomethylated and dimethylated to respectively lonine and N-methyllonine (NML) by lolM. LolP catalyzes hydroxylation of the methyl group in N-methylloline (NML) and further oxygenation to N-formylloline (NFL). A plant acetyltransferase is responsible for the acetylation of loline to form N-acetylloline (NAL). LolA might interact with aspartate kinase to prevent feedback inhibition of its activity by these end products and thereby promote production of l-homoserine from l-aspartate. The protein is FAD-binding monooxygenase lolF2 of Epichloe uncinata (Endophyte fungus).